Consider the following 488-residue polypeptide: 3-octaprenyl-4-hydroxybenzoate carboxy-lyase (488 aa).

Asn-172 serves as a coordination point for Mn(2+). Residues 175–177 (IYR), 189–191 (RWL), and 194–195 (RG) each bind prenylated FMN. Residue Glu-238 participates in Mn(2+) binding. The active-site Proton donor is the Asp-287.

The protein belongs to the UbiD family. In terms of assembly, homohexamer. Prenylated FMN is required as a cofactor. Mn(2+) serves as cofactor.

It is found in the cell membrane. It carries out the reaction a 4-hydroxy-3-(all-trans-polyprenyl)benzoate + H(+) = a 2-(all-trans-polyprenyl)phenol + CO2. The protein operates within cofactor biosynthesis; ubiquinone biosynthesis. Its function is as follows. Catalyzes the decarboxylation of 3-octaprenyl-4-hydroxy benzoate to 2-octaprenylphenol, an intermediate step in ubiquinone biosynthesis. The chain is 3-octaprenyl-4-hydroxybenzoate carboxy-lyase from Alkalilimnicola ehrlichii (strain ATCC BAA-1101 / DSM 17681 / MLHE-1).